The chain runs to 449 residues: Glutamyl-tRNA reductase (449 aa).

Residues 49 to 52 (TCNR), serine 109, 114 to 116 (ETQ), and glutamine 120 contribute to the substrate site. Cysteine 50 functions as the Nucleophile in the catalytic mechanism. 189-194 (GAGKMS) contributes to the NADP(+) binding site. The interval 427–449 (NFTHPREEMEESDEKRSYCGESR) is disordered.

This sequence belongs to the glutamyl-tRNA reductase family. As to quaternary structure, homodimer.

It catalyses the reaction (S)-4-amino-5-oxopentanoate + tRNA(Glu) + NADP(+) = L-glutamyl-tRNA(Glu) + NADPH + H(+). It functions in the pathway porphyrin-containing compound metabolism; protoporphyrin-IX biosynthesis; 5-aminolevulinate from L-glutamyl-tRNA(Glu): step 1/2. Catalyzes the NADPH-dependent reduction of glutamyl-tRNA(Glu) to glutamate 1-semialdehyde (GSA). The sequence is that of Glutamyl-tRNA reductase from Carboxydothermus hydrogenoformans (strain ATCC BAA-161 / DSM 6008 / Z-2901).